Here is a 65-residue protein sequence, read N- to C-terminus: Large ribosomal subunit protein bL28 (65 aa).

The interval 1-26 is disordered; the sequence is MARRDALTGKSALSGQSRSHALNATK. The segment covering 11-22 has biased composition (polar residues); it reads SALSGQSRSHAL.

This sequence belongs to the bacterial ribosomal protein bL28 family.

The chain is Large ribosomal subunit protein bL28 from Mycoplasma mycoides subsp. mycoides SC (strain CCUG 32753 / NCTC 10114 / PG1).